The sequence spans 60 residues: Sperm protamine P1 (60 aa).

The tract at residues 1 to 60 (MARYRHSRSRSRSRYQRRRRRRSRYRSQRRRYRRRRGSRRRRRRGRRRGYRRRYSRRRRY) is disordered.

It belongs to the protamine P1 family. As to expression, testis.

The protein localises to the nucleus. It localises to the chromosome. Its function is as follows. Protamines substitute for histones in the chromatin of sperm during the haploid phase of spermatogenesis. They compact sperm DNA into a highly condensed, stable and inactive complex. In Phascolarctos cinereus (Koala), this protein is Sperm protamine P1 (PRM1).